Reading from the N-terminus, the 158-residue chain is Protein-export protein SecB (158 aa).

The protein belongs to the SecB family. In terms of assembly, homotetramer, a dimer of dimers. One homotetramer interacts with 1 SecA dimer.

The protein localises to the cytoplasm. Functionally, one of the proteins required for the normal export of preproteins out of the cell cytoplasm. It is a molecular chaperone that binds to a subset of precursor proteins, maintaining them in a translocation-competent state. It also specifically binds to its receptor SecA. This chain is Protein-export protein SecB, found in Pectobacterium atrosepticum (strain SCRI 1043 / ATCC BAA-672) (Erwinia carotovora subsp. atroseptica).